We begin with the raw amino-acid sequence, 418 residues long: Putative ion-transport protein YfeO (418 aa).

The next 12 membrane-spanning stretches (helical) occupy residues 10 to 30, 54 to 74, 99 to 119, 120 to 140, 149 to 169, 186 to 206, 223 to 243, 258 to 278, 300 to 320, 322 to 342, 343 to 363, and 371 to 391; these read LLLSLPAVAIGIASSLILIVV, DSPLWIIGVLTLTGIAVGLVI, ALPGLIVALILGLAGGVSLGP, EHPIMTVNIALAVAIGARLLP, ILASAGTIGALFGTPVAAALI, LFAPLMAAAAGALTTGLFFHP, ILSGAIVAAIAIAAGMVAVWC, VLVLGIGGFILGILGVIGGPV, DYFLLAVIKLAALVVAAASGF, GGRIFPAVFVGVALGLMLHEH, VPAVPAAITVSCAILGIVLVV, and LFMAAVVVPNTTLLPLLCIVM.

The protein belongs to the chloride channel (TC 2.A.49) family.

It localises to the cell membrane. This is Putative ion-transport protein YfeO from Escherichia coli O139:H28 (strain E24377A / ETEC).